The chain runs to 75 residues: MARFYRRRKFCRFTAENVAYIDYKDIDTLKQYITENGKIVPSRITGTKARYQRQLALAIKQARYLSLIPYTDNHK.

The protein belongs to the bacterial ribosomal protein bS18 family. Part of the 30S ribosomal subunit. Forms a tight heterodimer with protein bS6.

Functionally, binds as a heterodimer with protein bS6 to the central domain of the 16S rRNA, where it helps stabilize the platform of the 30S subunit. This chain is Small ribosomal subunit protein bS18, found in Acinetobacter baumannii (strain AB307-0294).